The sequence spans 287 residues: Inorganic pyrophosphatase (287 aa).

Diphosphate is bound at residue Arg-80. The Mg(2+) site is built by Asp-117, Asp-122, and Asp-154.

It belongs to the PPase family. Mg(2+) is required as a cofactor.

The protein resides in the cytoplasm. The catalysed reaction is diphosphate + H2O = 2 phosphate + H(+). In Yarrowia lipolytica (strain CLIB 122 / E 150) (Yeast), this protein is Inorganic pyrophosphatase (IPP1).